The following is a 151-amino-acid chain: Cysteine protease inhibitor 5 (151 aa).

2 disulfide bridges follow: C13–C65 and C114–C120.

It belongs to the protease inhibitor I3 (leguminous Kunitz-type inhibitor) family.

The protein resides in the vacuole. Inhibitor of cysteine proteases. May protect the plant by inhibiting proteases of invading organisms. The chain is Cysteine protease inhibitor 5 from Solanum tuberosum (Potato).